The sequence spans 82 residues: Omega-conotoxin PnVIB (82 aa).

The N-terminal stretch at 1–22 is a signal peptide; that stretch reads MKLTCMMIVAVLFLTAWTVVTA. Residues 23–52 constitute a propeptide that is removed on maturation; it reads EPHSSNVLENLYLKAHHEMENPEASKLNTR. Disulfide bonds link Cys56–Cys73, Cys63–Cys77, and Cys72–Cys81.

As to expression, expressed by the venom duct.

The protein resides in the secreted. Functionally, omega-conotoxins act at presynaptic membranes, they bind and block voltage-gated calcium channels (Cav). Acts on high voltage-activated (HVA) calcium currents in molluscan neurons. This chain is Omega-conotoxin PnVIB, found in Conus pennaceus (Feathered cone).